A 137-amino-acid polypeptide reads, in one-letter code: Small ribosomal subunit protein uS9 (137 aa).

A disordered region spans residues 105–137; the sequence is LKAEGYLTRDPRAKERKKYGLHKARKAPQYSKR. Residues 118 to 137 are compositionally biased toward basic residues; it reads KERKKYGLHKARKAPQYSKR.

It belongs to the universal ribosomal protein uS9 family.

The sequence is that of Small ribosomal subunit protein uS9 (rpsI) from Synechocystis sp. (strain ATCC 27184 / PCC 6803 / Kazusa).